The primary structure comprises 347 residues: Probable dual-specificity RNA methyltransferase RlmN (347 aa).

Catalysis depends on E93, which acts as the Proton acceptor. The region spanning 99-333 is the Radical SAM core domain; that stretch reads TEKRLTACLS…VSLRKSRGLD (235 aa). Residues C106 and C338 are joined by a disulfide bond. [4Fe-4S] cluster contacts are provided by C113, C117, and C120. S-adenosyl-L-methionine-binding positions include 160-161, S190, 219-221, and N295; these read GE and SLH. The active-site S-methylcysteine intermediate is the C338.

It belongs to the radical SAM superfamily. RlmN family. [4Fe-4S] cluster is required as a cofactor.

The protein resides in the cytoplasm. It carries out the reaction adenosine(2503) in 23S rRNA + 2 reduced [2Fe-2S]-[ferredoxin] + 2 S-adenosyl-L-methionine = 2-methyladenosine(2503) in 23S rRNA + 5'-deoxyadenosine + L-methionine + 2 oxidized [2Fe-2S]-[ferredoxin] + S-adenosyl-L-homocysteine. The catalysed reaction is adenosine(37) in tRNA + 2 reduced [2Fe-2S]-[ferredoxin] + 2 S-adenosyl-L-methionine = 2-methyladenosine(37) in tRNA + 5'-deoxyadenosine + L-methionine + 2 oxidized [2Fe-2S]-[ferredoxin] + S-adenosyl-L-homocysteine. In terms of biological role, specifically methylates position 2 of adenine 2503 in 23S rRNA and position 2 of adenine 37 in tRNAs. The sequence is that of Probable dual-specificity RNA methyltransferase RlmN from Prochlorococcus marinus (strain MIT 9301).